Consider the following 146-residue polypeptide: MAGPLRAPLLLLAILAVALAVSPAAGSSPGKPPRLVGGPMDASVEEEGVRRALDFAVGEYNKASNDMYHSRALQVVRARKQIVAGVNYFLDVELGRTTCTKTQPNLDNCPFHDQPHLKRKAFCSFQIYAVPWQGTMTLSKSTCQDA.

The signal sequence occupies residues 1–26 (MAGPLRAPLLLLAILAVALAVSPAAG). The residue at position 43 (Ser43) is a Phosphoserine; by FAM20C. The short motif at 81–85 (QIVAG) is the Secondary area of contact element. 2 disulfide bridges follow: Cys99–Cys109 and Cys123–Cys143.

This sequence belongs to the cystatin family. As to quaternary structure, homodimer. The Thr-25 variant is O-glycosylated with a core 1 or possibly core 8 glycan. The signal peptide of the O-glycosylated Thr-25 variant is cleaved between Ala-20 and Val-21. In terms of tissue distribution, expressed in submandibular and sublingual saliva but not in parotid saliva (at protein level). Expressed in various body fluids, such as the cerebrospinal fluid and plasma. Expressed in highest levels in the epididymis, vas deferens, brain, thymus, and ovary and the lowest in the submandibular gland.

The protein resides in the secreted. In terms of biological role, as an inhibitor of cysteine proteinases, this protein is thought to serve an important physiological role as a local regulator of this enzyme activity. This Homo sapiens (Human) protein is Cystatin-C (CST3).